A 319-amino-acid chain; its full sequence is MamJ paralog LimJ (319 aa).

Disordered regions lie at residues 1–59 (MMME…PAPV) and 145–176 (AAAP…TETE). Low complexity predominate over residues 30 to 52 (AALAPAADAEIPASSAPEPAAPI). Positions 150–164 (PEPEPVPEPEPEPEP) are enriched in acidic residues.

This sequence belongs to the magnetosome MamJ protein family.

The protein resides in the magnetosome. Functionally, regulates the dynamic behavior of MamK filaments; paralog MamJ also promotes MamK turnover. At least one other protein besides MamJ and LimJ is required for MamK turnover. Might connect magnetosomes to MamK filaments. The sequence is that of MamJ paralog LimJ from Paramagnetospirillum magneticum (strain ATCC 700264 / AMB-1) (Magnetospirillum magneticum).